The following is a 314-amino-acid chain: MFDKIMPLIGSLLLVICVMVGVAFLTLLERKVLGYIQIRKGPNKVGFNGLLQPFSDAVKLFTKEQTYPLLSNYISYYFSPIFSLFLSLVIWMCIPYLIKLYSFNLGVLFFLCCTSLGVYTVMIAGWSSNSNYALLGGLRAVAQTISYEVSLALILLSFIFLIGNYNFLNFYSYQSYIWFIFFCFPLGLVWLASCLAETNRTPFDFAEGESELVSGFNVEYSSGGFALIFLAEYSSILFMSMLFVVIFLGSDIYSLMFFFKLTFISFVFIWVRGTLPRFRYDKLMYLAWKSFLPLSLNYLFFFVGLKIFFISLLF.

A run of 8 helical transmembrane segments spans residues 5 to 25, 78 to 98, 105 to 125, 151 to 171, 176 to 196, 227 to 247, 251 to 271, and 294 to 314; these read IMPL…VAFL, FSPI…PYLI, LGVL…MIAG, LALI…LNFY, YIWF…SCLA, LIFL…VVIF, DIYS…FIWV, and LSLN…SLLF.

It belongs to the complex I subunit 1 family.

It localises to the mitochondrion inner membrane. It catalyses the reaction a ubiquinone + NADH + 5 H(+)(in) = a ubiquinol + NAD(+) + 4 H(+)(out). Its function is as follows. Core subunit of the mitochondrial membrane respiratory chain NADH dehydrogenase (Complex I) that is believed to belong to the minimal assembly required for catalysis. Complex I functions in the transfer of electrons from NADH to the respiratory chain. The immediate electron acceptor for the enzyme is believed to be ubiquinone. The protein is NADH-ubiquinone oxidoreductase chain 1 (ND1) of Anopheles quadrimaculatus (Common malaria mosquito).